A 611-amino-acid polypeptide reads, in one-letter code: Inhibitor of apoptosis protein (611 aa).

BIR repeat units lie at residues 30-97 (ELYR…CSFV), 176-242 (EEAR…CPFV), and 262-329 (HEAR…CEYL). Cysteine 299, cysteine 302, histidine 319, and cysteine 326 together coordinate Zn(2+). The region spanning 446–536 (VASDDLSLIR…VLYKDLFVEK (91 aa)) is the CARD domain. The RING-type zinc-finger motif lies at 564–599 (CKVCMDKEVSIVFIPCGHLVVCKECAPSLRKCPICR).

This sequence belongs to the IAP family. As to expression, cells of the T-lymphocyte lineage. Found in both cortical and medullary cells of the thymus. Expressed at relatively high levels also in spleen, bursa, intestine and lung and at very low levels in testis, brain and skeletal muscle.

It localises to the nucleus. It is found in the cytoplasm. Functionally, apoptotic suppressor. This Gallus gallus (Chicken) protein is Inhibitor of apoptosis protein (ITA).